The following is a 75-amino-acid chain: Large ribosomal subunit protein bL31 (75 aa).

The Zn(2+) site is built by Cys16, Cys18, Cys38, and Cys41.

This sequence belongs to the bacterial ribosomal protein bL31 family. Type A subfamily. In terms of assembly, part of the 50S ribosomal subunit. It depends on Zn(2+) as a cofactor.

Binds the 23S rRNA. This chain is Large ribosomal subunit protein bL31, found in Nocardioides sp. (strain ATCC BAA-499 / JS614).